A 210-amino-acid chain; its full sequence is MKGLVGKKLGMTRIFTKDGISIPVTVIEIKANRVTQIKNLDSDGYLALQITTGTKKASRVNKPKAGHFAKANVEAGRGLWEFRVSEQDATVFLGHTFEVSMFKPGDIVDVTGKSKGKGFSGTVKRWNFRTQDASHGNSLSHRVPGSIGQNQTPGKVFKGKKMSGQLGNERVTIQNLEVVRVDVVREILLIKGGVPGAVGKDVIVKLAVKA.

Positions 133–156 are disordered; the sequence is ASHGNSLSHRVPGSIGQNQTPGKV. Gln-151 carries the post-translational modification N5-methylglutamine.

The protein belongs to the universal ribosomal protein uL3 family. Part of the 50S ribosomal subunit. Forms a cluster with proteins L14 and L19. Methylated by PrmB.

Functionally, one of the primary rRNA binding proteins, it binds directly near the 3'-end of the 23S rRNA, where it nucleates assembly of the 50S subunit. The polypeptide is Large ribosomal subunit protein uL3 (Hamiltonella defensa subsp. Acyrthosiphon pisum (strain 5AT)).